Reading from the N-terminus, the 109-residue chain is Nucleoid-associated protein VIBHAR_03086 (109 aa).

Disordered stretches follow at residues 1–21 and 88–109; these read MFGK…QDRM and QKEK…KMPF.

This sequence belongs to the YbaB/EbfC family. As to quaternary structure, homodimer.

The protein resides in the cytoplasm. It is found in the nucleoid. In terms of biological role, binds to DNA and alters its conformation. May be involved in regulation of gene expression, nucleoid organization and DNA protection. The protein is Nucleoid-associated protein VIBHAR_03086 of Vibrio campbellii (strain ATCC BAA-1116).